A 194-amino-acid polypeptide reads, in one-letter code: Large ribosomal subunit protein bL27c (194 aa).

A chloroplast-targeting transit peptide spans Met-1–Ser-57. Positions Ser-57–Arg-76 are disordered.

In terms of assembly, component of the chloroplast large ribosomal subunit (LSU). Mature 70S chloroplast ribosomes of higher plants consist of a small (30S) and a large (50S) subunit. The 30S small subunit contains 1 molecule of ribosomal RNA (16S rRNA) and 24 different proteins. The 50S large subunit contains 3 rRNA molecules (23S, 5S and 4.5S rRNA) and 33 different proteins.

It localises to the plastid. Its subcellular location is the chloroplast. Component of the chloroplast ribosome (chloro-ribosome), a dedicated translation machinery responsible for the synthesis of chloroplast genome-encoded proteins, including proteins of the transcription and translation machinery and components of the photosynthetic apparatus. In Spinacia oleracea (Spinach), this protein is Large ribosomal subunit protein bL27c (RPL27).